The chain runs to 85 residues: U4-theraphotoxin-Hhn1ad (85 aa).

A signal peptide spans 1-22 (MKVTLIAILTCAAVLVLHTTAA). Positions 23–48 (EELKTESQLMEVGMPDTELATVDEER) are excised as a propeptide. Disulfide bonds link Cys52–Cys66, Cys56–Cys77, and Cys71–Cys82.

This sequence belongs to the neurotoxin 12 (Hwtx-2) family. 02 (Hwtx-2) subfamily. As to expression, expressed by the venom gland.

It is found in the secreted. In terms of biological role, postsynaptic neurotoxin. The sequence is that of U4-theraphotoxin-Hhn1ad from Cyriopagopus hainanus (Chinese bird spider).